Consider the following 293-residue polypeptide: Movement protein BC1 (293 aa).

The protein belongs to the begomovirus movement protein BC1 family. In terms of assembly, binds to dimeric supercoiled plasmid DNA. Phosphorylated.

The protein localises to the host cell membrane. The protein resides in the host microsome membrane. It is found in the host endoplasmic reticulum membrane. In terms of biological role, transports viral genome to neighboring plant cells directly through plasmosdesmata, without any budding. The movement protein allows efficient cell to cell propagation, by bypassing the host cell wall barrier. Begomovirus genome is shuttled out of nucleus by Nuclear shuttle protein (NSP) and the movement protein transports the DNA-NSP complex to cell plasmodesmata and facilitates further movement across the cell wall. In Potato yellow mosaic virus (isolate Venezuela) (PYMV), this protein is Movement protein BC1.